We begin with the raw amino-acid sequence, 298 residues long: Inosose dehydratase (298 aa).

The protein belongs to the IolE/MocC family. Requires glutathione as cofactor. Co(2+) serves as cofactor. The cofactor is Mn(2+).

It carries out the reaction scyllo-inosose = 3D-3,5/4-trihydroxycyclohexane-1,2-dione + H2O. It functions in the pathway polyol metabolism; myo-inositol degradation into acetyl-CoA; acetyl-CoA from myo-inositol: step 2/7. In terms of biological role, catalyzes the dehydration of inosose (2-keto-myo-inositol, 2KMI or 2,4,6/3,5-pentahydroxycyclohexanone) to 3D-(3,5/4)-trihydroxycyclohexane-1,2-dione (D-2,3-diketo-4-deoxy-epi-inositol). This Lacticaseibacillus casei (Lactobacillus casei) protein is Inosose dehydratase.